A 182-amino-acid polypeptide reads, in one-letter code: Protein LIGHT-DEPENDENT SHORT HYPOCOTYLS 5 (182 aa).

Over residues 1 to 16 the composition is skewed to low complexity; sequence MEGETAAKAAASSSSS. Disordered stretches follow at residues 1–22 and 138–168; these read MEGETAAKAAASSSSSPSRYES and ARGIPYDKKKRKRPHTDTATPIAGDGDDAEG. The ALOG domain occupies 19–147; the sequence is RYESQKRRDW…ARGIPYDKKK (129 aa). Positions 145-149 match the Nuclear localization signal motif; that stretch reads KKKRK.

It belongs to the plant homeotic and developmental regulators ALOG protein family.

The protein localises to the nucleus. Probable transcription regulator that acts as a developmental regulator by promoting cell growth in response to light. This Arabidopsis thaliana (Mouse-ear cress) protein is Protein LIGHT-DEPENDENT SHORT HYPOCOTYLS 5 (LSH5).